The following is a 351-amino-acid chain: uncharacterized protein (351 aa).

A signal peptide spans M1–A27. The segment at A27–G71 is disordered. Residues A30–N60 are compositionally biased toward basic and acidic residues.

This sequence belongs to the aerolysin family.

This is an uncharacterized protein from Staphylococcus aureus (strain USA300).